The chain runs to 239 residues: Tumor protein p53-inducible nuclear protein 1 (239 aa).

The short motif at 25-37 (EKEDDEWILVDFI) is the LIR element.

As to quaternary structure, interacts with p53/TP53 and HIPK2. Interacts with PRKCG, GABARAP, GABARAPL1, GABARAPL2, MAP1LC3A, MAP1LC3B and MAP1LC3C. In terms of tissue distribution, ubiquitously expressed with highest levels in the thymus.

The protein localises to the cytoplasm. It is found in the cytosol. Its subcellular location is the nucleus. It localises to the PML body. The protein resides in the cytoplasmic vesicle. The protein localises to the autophagosome. In terms of biological role, antiproliferative and proapoptotic protein involved in cell stress response which acts as a dual regulator of transcription and autophagy. Acts as a positive regulator of autophagy. In response to cellular stress or activation of autophagy, relocates to autophagosomes where it interacts with autophagosome-associated proteins GABARAP, GABARAPL1/L2, MAP1LC3A/B/C and regulates autophagy. Acts as an antioxidant and plays a major role in p53/TP53-driven oxidative stress response. Possesses both a p53/TP53-independent intracellular reactive oxygen species (ROS) regulatory function and a p53/TP53-dependent transcription regulatory function. Positively regulates p53/TP53 and p73/TP73 and stimulates their capacity to induce apoptosis and regulate cell cycle. In response to double-strand DNA breaks, promotes p53/TP53 phosphorylation on 'Ser-46' and subsequent apoptosis. Acts as a tumor suppressor by inducing cell death by an autophagy and caspase-dependent mechanism. Can reduce cell migration by regulating the expression of SPARC. The sequence is that of Tumor protein p53-inducible nuclear protein 1 (Trp53inp1) from Mus musculus (Mouse).